A 180-amino-acid chain; its full sequence is Large ribosomal subunit protein uL6 (180 aa).

It belongs to the universal ribosomal protein uL6 family. As to quaternary structure, part of the 50S ribosomal subunit.

This protein binds to the 23S rRNA, and is important in its secondary structure. It is located near the subunit interface in the base of the L7/L12 stalk, and near the tRNA binding site of the peptidyltransferase center. This is Large ribosomal subunit protein uL6 from Borreliella burgdorferi (strain ATCC 35210 / DSM 4680 / CIP 102532 / B31) (Borrelia burgdorferi).